Consider the following 643-residue polypeptide: Threonine--tRNA ligase (643 aa).

The TGS domain occupies 1 to 61 (MVAISLPDGS…TTDASVSLIT (61 aa)). The segment at 243–534 (DHRRVGQEMD…LIENCAGRFP (292 aa)) is catalytic. C334, H385, and H511 together coordinate Zn(2+).

This sequence belongs to the class-II aminoacyl-tRNA synthetase family. As to quaternary structure, homodimer. Zn(2+) serves as cofactor.

It localises to the cytoplasm. It catalyses the reaction tRNA(Thr) + L-threonine + ATP = L-threonyl-tRNA(Thr) + AMP + diphosphate + H(+). Functionally, catalyzes the attachment of threonine to tRNA(Thr) in a two-step reaction: L-threonine is first activated by ATP to form Thr-AMP and then transferred to the acceptor end of tRNA(Thr). Also edits incorrectly charged L-seryl-tRNA(Thr). This chain is Threonine--tRNA ligase, found in Rhodospirillum rubrum (strain ATCC 11170 / ATH 1.1.1 / DSM 467 / LMG 4362 / NCIMB 8255 / S1).